Reading from the N-terminus, the 574-residue chain is Sorting nexin-33 (574 aa).

One can recognise an SH3 domain in the interval 1–61 (MALKGRALYD…PASYVEIVRP (61 aa)). The residue at position 77 (Ser77) is a Phosphoserine. Positions 79–90 (GTQGSLYSSPSM) are enriched in polar residues. Positions 79 to 116 (GTQGSLYSSPSMASPARSGGGSGFLSNPGSFEDDDDDD) are disordered. Ser92 carries the post-translational modification Phosphoserine. The region spanning 230 to 340 (FACSIEDPTK…HFLSCLDDKQ (111 aa)) is the PX domain. Positions 371-574 (LQDVEDRVDT…EKTLHMYDHL (204 aa)) constitute a BAR domain.

The protein belongs to the sorting nexin family. Homodimer (via BAR domain). Interacts with ADAM15. Interacts with FASLG. Interacts (via SH3 domain) with DNM1 and DNM2. Interacts with WASL. Interacts with FCHSD1 (via the F-BAR domain). Phosphorylated. As to expression, detected in brain (at protein level).

The protein resides in the cytoplasm. It localises to the cytosol. It is found in the membrane. Its subcellular location is the cytoplasmic vesicle membrane. Its function is as follows. Plays a role in the reorganization of the cytoskeleton, endocytosis and cellular vesicle trafficking via its interactions with membranes, WASL, DNM1 and DNM2. Acts both during interphase and at the end of mitotic cell divisions. Required for efficient progress through mitosis and cytokinesis. Required for normal formation of the cleavage furrow at the end of mitosis. Modulates endocytosis of cell-surface proteins, such as APP and PRNP; this then modulates the secretion of APP and PRNP peptides. Promotes membrane tubulation (in vitro). May promote the formation of macropinosomes. The chain is Sorting nexin-33 (Snx33) from Mus musculus (Mouse).